The primary structure comprises 231 residues: RNA pyrophosphohydrolase (231 aa).

One can recognise a Nudix hydrolase domain in the interval 6 to 149 (GFRPNVGIIL…KRDVYQLALT (144 aa)). The short motif at 38–59 (GGIKYGETPEQAMYRELHEEIG) is the Nudix box element. Residues 168–200 (VHHGRHGSGQRYAQQPGQPPTLAQRRPLQPVTQ) are disordered.

Belongs to the Nudix hydrolase family. RppH subfamily. It depends on a divalent metal cation as a cofactor.

Its function is as follows. Accelerates the degradation of transcripts by removing pyrophosphate from the 5'-end of triphosphorylated RNA, leading to a more labile monophosphorylated state that can stimulate subsequent ribonuclease cleavage. In Cupriavidus pinatubonensis (strain JMP 134 / LMG 1197) (Cupriavidus necator (strain JMP 134)), this protein is RNA pyrophosphohydrolase.